Consider the following 250-residue polypeptide: Cyclopentanol dehydrogenase (250 aa).

The NAD(+) site is built by Met18, Asp37, Asp63, Val64, Asn90, Tyr155, Lys159, Ile188, Thr190, and Thr193. Catalysis depends on Tyr155, which acts as the Proton acceptor.

This sequence belongs to the short-chain dehydrogenases/reductases (SDR) family.

The catalysed reaction is cyclopentanol + NAD(+) = cyclopentanone + NADH + H(+). The enzyme catalyses cyclohexanol + NAD(+) = cyclohexanone + NADH + H(+). It functions in the pathway alcohol metabolism; cyclopentanol degradation; 5-valerolactone from cyclopentanol: step 1/2. In terms of biological role, catalyzes the oxidation of cyclopentanol to cyclopentanone and cyclohexanol to cyclohexanone. The activity toward cyclohexanol is 60% that of cyclopentanol. The sequence is that of Cyclopentanol dehydrogenase from Comamonas sp. (strain NCIMB 9872).